Reading from the N-terminus, the 284-residue chain is Formyltetrahydrofolate deformylase (284 aa).

Positions 7 to 90 (TLLVSCPDQP…QIHFSDQLPR (84 aa)) constitute an ACT domain. Asp228 is a catalytic residue.

It belongs to the PurU family.

The enzyme catalyses (6R)-10-formyltetrahydrofolate + H2O = (6S)-5,6,7,8-tetrahydrofolate + formate + H(+). Its pathway is purine metabolism; IMP biosynthesis via de novo pathway; formate from 10-formyl-5,6,7,8-tetrahydrofolate: step 1/1. Its function is as follows. Catalyzes the hydrolysis of 10-formyltetrahydrofolate (formyl-FH4) to formate and tetrahydrofolate (FH4). This chain is Formyltetrahydrofolate deformylase, found in Synechocystis sp. (strain ATCC 27184 / PCC 6803 / Kazusa).